The sequence spans 558 residues: Asparagine--tRNA ligase, cytoplasmic (558 aa).

A Phosphoserine modification is found at S71. A disordered region spans residues M79 to R101. Residues H81–R101 show a composition bias toward basic and acidic residues. An N6-acetyllysine mark is found at K254 and K500.

It belongs to the class-II aminoacyl-tRNA synthetase family. In terms of assembly, homodimer.

It is found in the cytoplasm. The enzyme catalyses tRNA(Asn) + L-asparagine + ATP = L-asparaginyl-tRNA(Asn) + AMP + diphosphate + H(+). Catalyzes the attachment of asparagine to tRNA(Asn) in a two-step reaction: asparagine is first activated by ATP to form Asn-AMP and then transferred to the acceptor end of tRNA(Asn). In addition to its essential role in protein synthesis, acts as a signaling molecule that induced migration of CCR3-expressing cells. Has an essential role in the development of the cerebral cortex, being required for proper proliferation of radial glial cells. The protein is Asparagine--tRNA ligase, cytoplasmic of Macaca fascicularis (Crab-eating macaque).